The primary structure comprises 427 residues: UBX domain-containing protein 10 (427 aa).

Residues 247–311 (LERFRSEREA…VQKKKKQYRA (65 aa)) are a coiled coil. The region spanning 323–425 (SEDEPARLSI…FPNGTVVVEL (103 aa)) is the UBX domain.

It is found in the endoplasmic reticulum. In terms of biological role, involved in protein degradation through the ubiquitin/proteasome pathway. The chain is UBX domain-containing protein 10 (ucp10) from Schizosaccharomyces pombe (strain 972 / ATCC 24843) (Fission yeast).